Here is a 126-residue protein sequence, read N- to C-terminus: Protein ApaG (126 aa).

In terms of domain architecture, ApaG spans 2–126 (SDPRYQIDVS…FRLAVPGALH (125 aa)).

This is Protein ApaG from Pseudomonas putida (strain W619).